The primary structure comprises 84 residues: Large ribosomal subunit protein bL27 (84 aa).

The protein belongs to the bacterial ribosomal protein bL27 family.

The chain is Large ribosomal subunit protein bL27 from Buchnera aphidicola subsp. Schizaphis graminum (strain Sg).